The primary structure comprises 357 residues: Peptide chain release factor 1 (357 aa).

Residue Gln234 is modified to N5-methylglutamine.

Belongs to the prokaryotic/mitochondrial release factor family. Methylated by PrmC. Methylation increases the termination efficiency of RF1.

Its subcellular location is the cytoplasm. Functionally, peptide chain release factor 1 directs the termination of translation in response to the peptide chain termination codons UAG and UAA. This Frankia casuarinae (strain DSM 45818 / CECT 9043 / HFP020203 / CcI3) protein is Peptide chain release factor 1.